Reading from the N-terminus, the 110-residue chain is Large ribosomal subunit protein uL22 (110 aa).

The protein belongs to the universal ribosomal protein uL22 family. In terms of assembly, part of the 50S ribosomal subunit.

In terms of biological role, this protein binds specifically to 23S rRNA; its binding is stimulated by other ribosomal proteins, e.g. L4, L17, and L20. It is important during the early stages of 50S assembly. It makes multiple contacts with different domains of the 23S rRNA in the assembled 50S subunit and ribosome. Functionally, the globular domain of the protein is located near the polypeptide exit tunnel on the outside of the subunit, while an extended beta-hairpin is found that lines the wall of the exit tunnel in the center of the 70S ribosome. The polypeptide is Large ribosomal subunit protein uL22 (Delftia acidovorans (strain DSM 14801 / SPH-1)).